We begin with the raw amino-acid sequence, 623 residues long: Endoglucanase 12 (623 aa).

Residues 1–73 (MYSANHWGGS…LGCVVVKRKL (73 aa)) lie on the Cytoplasmic side of the membrane. The chain crosses the membrane as a helical; Signal-anchor for type II membrane protein span at residues 74-94 (LWWVLWTLLAAFILIGLPVII). Residues 95 to 623 (AKSIPKKKPH…TPPPPSKWKP (529 aa)) are Extracellular-facing. Asp166 functions as the Nucleophile in the catalytic mechanism. N-linked (GlcNAc...) asparagine glycosylation is found at Asn217, Asn236, Asn324, Asn345, Asn408, and Asn425. Residues His513, Asp561, and Glu570 contribute to the active site.

Belongs to the glycosyl hydrolase 9 (cellulase E) family. In terms of tissue distribution, ubiquitous.

Its subcellular location is the membrane. It catalyses the reaction Endohydrolysis of (1-&gt;4)-beta-D-glucosidic linkages in cellulose, lichenin and cereal beta-D-glucans.. The chain is Endoglucanase 12 (GLU3) from Oryza sativa subsp. japonica (Rice).